Here is a 327-residue protein sequence, read N- to C-terminus: Probable cell division protein WhiA (327 aa).

The segment at residues 275–308 (SLEELGQLADPPMTKDAVAGRIRRLLSMADRRAR) is a DNA-binding region (H-T-H motif).

It belongs to the WhiA family.

Its function is as follows. Involved in cell division and chromosome segregation. This is Probable cell division protein WhiA from Nocardia farcinica (strain IFM 10152).